The sequence spans 461 residues: Photosystem II CP43 reaction center protein (461 aa).

Residues 1 to 2 (ME) constitute a propeptide that is removed on maturation. Position 3 is an N-acetylthreonine (threonine 3). Threonine 3 carries the phosphothreonine modification. 5 helical membrane-spanning segments follow: residues 57–81 (LFEV…PHLA), 122–143 (LIGP…KDKN), 166–188 (KAMY…RVIT), 243–263 (KPFA…LSYS), and 279–300 (WFNN…ASQA). Glutamate 355 is a [CaMn4O5] cluster binding site. Residues 435–459 (RARAAAAGFEKGIERETEPALSMKP) form a helical membrane-spanning segment.

The protein belongs to the PsbB/PsbC family. PsbC subfamily. In terms of assembly, PSII is composed of 1 copy each of membrane proteins PsbA, PsbB, PsbC, PsbD, PsbE, PsbF, PsbH, PsbI, PsbJ, PsbK, PsbL, PsbM, PsbT, PsbX, PsbY, PsbZ, Psb30/Ycf12, at least 3 peripheral proteins of the oxygen-evolving complex and a large number of cofactors. It forms dimeric complexes. Binds multiple chlorophylls and provides some of the ligands for the Ca-4Mn-5O cluster of the oxygen-evolving complex. It may also provide a ligand for a Cl- that is required for oxygen evolution. PSII binds additional chlorophylls, carotenoids and specific lipids. is required as a cofactor.

The protein localises to the plastid. It localises to the chloroplast thylakoid membrane. In terms of biological role, one of the components of the core complex of photosystem II (PSII). It binds chlorophyll and helps catalyze the primary light-induced photochemical processes of PSII. PSII is a light-driven water:plastoquinone oxidoreductase, using light energy to abstract electrons from H(2)O, generating O(2) and a proton gradient subsequently used for ATP formation. The sequence is that of Photosystem II CP43 reaction center protein from Chlorokybus atmophyticus (Soil alga).